A 419-amino-acid polypeptide reads, in one-letter code: Caspase-12 (419 aa).

One can recognise a CARD domain in the interval 1 to 92 (MAARRTHERD…QLSLQFSNDE (92 aa)). Phosphoserine is present on Ser85. The segment at 88–113 (FSNDEDDGPQKICTPSSPSESKRKVE) is disordered. Residues His250 and Cys298 contribute to the active site.

The protein belongs to the peptidase C14A family. Heterotetramer that consists of two anti-parallel arranged heterodimers, each one formed by two subunits (Potential). Interacts with TRAF2 under resting conditions; this interaction is reduced in ER stress conditions. As to expression, mainly expressed in skeletal muscle and lung.

In terms of biological role, involved in the activation cascade of caspases responsible for apoptosis execution. This Mus musculus (Mouse) protein is Caspase-12 (Casp12).